An 804-amino-acid chain; its full sequence is Phenylalanine--tRNA ligase beta subunit (804 aa).

One can recognise a tRNA-binding domain in the interval 38–148 (RAAFRAFTIA…ENAPVGTSFA (111 aa)). The region spanning 401 to 476 (HTARVIDFPV…RIHGINRIDP (76 aa)) is the B5 domain. 4 residues coordinate Mg(2+): Asp454, Asp460, Glu463, and Glu464. One can recognise an FDX-ACB domain in the interval 710–803 (SLFQSLKRDY…VAKQTGGVLR (94 aa)).

Belongs to the phenylalanyl-tRNA synthetase beta subunit family. Type 1 subfamily. In terms of assembly, tetramer of two alpha and two beta subunits. Mg(2+) is required as a cofactor.

The protein resides in the cytoplasm. It carries out the reaction tRNA(Phe) + L-phenylalanine + ATP = L-phenylalanyl-tRNA(Phe) + AMP + diphosphate + H(+). The sequence is that of Phenylalanine--tRNA ligase beta subunit from Brucella suis biovar 1 (strain 1330).